A 328-amino-acid polypeptide reads, in one-letter code: Tryptophan--tRNA ligase (328 aa).

ATP contacts are provided by residues 9 to 11 (QPS) and 17 to 18 (GN). Positions 10 to 18 (PSGVITIGN) match the 'HIGH' region motif. Asp132 serves as a coordination point for L-tryptophan. ATP is bound by residues 144-146 (GED), Ile183, and 192-196 (KMSKS). Positions 192-196 (KMSKS) match the 'KMSKS' region motif.

Belongs to the class-I aminoacyl-tRNA synthetase family. In terms of assembly, homodimer.

The protein localises to the cytoplasm. It carries out the reaction tRNA(Trp) + L-tryptophan + ATP = L-tryptophyl-tRNA(Trp) + AMP + diphosphate + H(+). With respect to regulation, inhibited by indolmycin, a competitive inhibitor for tryptophan. Its function is as follows. Catalyzes the attachment of tryptophan to tRNA(Trp). This is Tryptophan--tRNA ligase from Geobacillus stearothermophilus (Bacillus stearothermophilus).